The following is a 291-amino-acid chain: NAD kinase (291 aa).

Residue aspartate 55 is the Proton acceptor of the active site. NAD(+)-binding positions include 55–56, arginine 60, 130–131, aspartate 160, and 171–176; these read DG, NE, and TAYAFS.

This sequence belongs to the NAD kinase family. A divalent metal cation is required as a cofactor.

It localises to the cytoplasm. The catalysed reaction is NAD(+) + ATP = ADP + NADP(+) + H(+). Involved in the regulation of the intracellular balance of NAD and NADP, and is a key enzyme in the biosynthesis of NADP. Catalyzes specifically the phosphorylation on 2'-hydroxyl of the adenosine moiety of NAD to yield NADP. The polypeptide is NAD kinase (Corynebacterium glutamicum (strain ATCC 13032 / DSM 20300 / JCM 1318 / BCRC 11384 / CCUG 27702 / LMG 3730 / NBRC 12168 / NCIMB 10025 / NRRL B-2784 / 534)).